An 87-amino-acid polypeptide reads, in one-letter code: Envelope glycoprotein N (87 aa).

Positions 1 to 24 are cleaved as a signal peptide; that stretch reads MGSITASFILITMQILFFCEDSSG. Residues 25-48 are Virion surface-facing; sequence EPNFAERNFWHASCSARGVYIDGS. The chain crosses the membrane as a helical span at residues 49 to 69; it reads MITTLFFYASLLGVCVALISL. At 70–87 the chain is on the intravirion side; the sequence is AYHACFRLFTRSVLRSTW.

The protein belongs to the herpesviridae glycoprotein N family. As to quaternary structure, interacts (via N-terminus) with gM (via N-terminus). The gM-gN heterodimer forms the gCII complex.

It localises to the virion membrane. Its subcellular location is the host membrane. The protein resides in the host Golgi apparatus. The protein localises to the host trans-Golgi network. Functionally, envelope glycoprotein necessary for proper maturation of gM and modulation of its membrane fusion activity. Also plays a critical role in virion morphogenesis. The protein is Envelope glycoprotein N of Varicella-zoster virus (strain Dumas) (HHV-3).